A 148-amino-acid chain; its full sequence is Nucleoside diphosphate kinase (148 aa).

Residues Lys9, Phe57, Arg85, Thr91, Arg102, and Asn112 each coordinate ATP. Thr91 is modified (phosphothreonine). The active-site Pros-phosphohistidine intermediate is His115. Ser122 is subject to Phosphoserine.

This sequence belongs to the NDK family. As to quaternary structure, homotetramer. Mg(2+) serves as cofactor.

Its subcellular location is the cytoplasm. The catalysed reaction is a 2'-deoxyribonucleoside 5'-diphosphate + ATP = a 2'-deoxyribonucleoside 5'-triphosphate + ADP. It catalyses the reaction a ribonucleoside 5'-diphosphate + ATP = a ribonucleoside 5'-triphosphate + ADP. Major role in the synthesis of nucleoside triphosphates other than ATP. The ATP gamma phosphate is transferred to the NDP beta phosphate via a ping-pong mechanism, using a phosphorylated active-site intermediate. This chain is Nucleoside diphosphate kinase, found in Bacillus licheniformis (strain ATCC 14580 / DSM 13 / JCM 2505 / CCUG 7422 / NBRC 12200 / NCIMB 9375 / NCTC 10341 / NRRL NRS-1264 / Gibson 46).